Here is a 216-residue protein sequence, read N- to C-terminus: GTP cyclohydrolase-2 (216 aa).

51 to 55 (RIHSE) provides a ligand contact to GTP. Residues Cys56, Cys67, and Cys69 each coordinate Zn(2+). Residues Gln72, 94 to 96 (EGR), and Thr116 contribute to the GTP site. Asp128 serves as the catalytic Proton acceptor. Arg130 functions as the Nucleophile in the catalytic mechanism. Thr151 and Lys156 together coordinate GTP.

It belongs to the GTP cyclohydrolase II family. It depends on Zn(2+) as a cofactor.

The catalysed reaction is GTP + 4 H2O = 2,5-diamino-6-hydroxy-4-(5-phosphoribosylamino)-pyrimidine + formate + 2 phosphate + 3 H(+). It participates in cofactor biosynthesis; riboflavin biosynthesis; 5-amino-6-(D-ribitylamino)uracil from GTP: step 1/4. In terms of biological role, catalyzes the conversion of GTP to 2,5-diamino-6-ribosylamino-4(3H)-pyrimidinone 5'-phosphate (DARP), formate and pyrophosphate. The sequence is that of GTP cyclohydrolase-2 from Haemophilus influenzae (strain PittEE).